The sequence spans 373 residues: Ubiquitin carboxyl-terminal hydrolase 50 (373 aa).

The 321-residue stretch at 44-364 (TGLRNLGNTC…TAYLLFYSCQ (321 aa)) folds into the USP domain. The Nucleophile role is filled by Cys53. His322 (proton acceptor) is an active-site residue.

This sequence belongs to the peptidase C19 family.

Its subcellular location is the cytoplasm. The protein resides in the cytoskeleton. It is found in the microtubule organizing center. It localises to the centrosome. The protein localises to the nucleus. It catalyses the reaction Thiol-dependent hydrolysis of ester, thioester, amide, peptide and isopeptide bonds formed by the C-terminal Gly of ubiquitin (a 76-residue protein attached to proteins as an intracellular targeting signal).. Its function is as follows. Deubiquitinating enzyme that removes conjugated ubiquitin from specific proteins to regulate different cellular processes. Regulates the inflammasome signaling pathway by deubiquitinating 'Lys-63'-linked polyubiquitination of the PYCARD/ASC adapter protein. Regulates the ubiquitination and stability of the ACE2 protein. Acts as a negative regulator of the G2/M checkpoint pathway, by preventing serine/threonine kinase WEE1 degradation, thereby repressing entry into mitosis following activation of the G2/M DNA damage checkpoint. This is Ubiquitin carboxyl-terminal hydrolase 50 (USP50) from Macaca fascicularis (Crab-eating macaque).